The primary structure comprises 224 residues: ATP synthase subunit a (224 aa).

A run of 6 helical transmembrane segments spans residues Leu17 to Leu37, Ile72 to Ile92, Leu99 to Ile119, Met125 to Ile145, Leu170 to Leu190, and Ile195 to Leu215.

The protein belongs to the ATPase A chain family. As to quaternary structure, F-type ATPases have 2 components, CF(1) - the catalytic core - and CF(0) - the membrane proton channel. CF(1) has five subunits: alpha(3), beta(3), gamma(1), delta(1), epsilon(1). CF(0) has three main subunits: a, b and c.

The protein localises to the mitochondrion inner membrane. Its function is as follows. Mitochondrial membrane ATP synthase (F(1)F(0) ATP synthase or Complex V) produces ATP from ADP in the presence of a proton gradient across the membrane which is generated by electron transport complexes of the respiratory chain. F-type ATPases consist of two structural domains, F(1) - containing the extramembraneous catalytic core and F(0) - containing the membrane proton channel, linked together by a central stalk and a peripheral stalk. During catalysis, ATP synthesis in the catalytic domain of F(1) is coupled via a rotary mechanism of the central stalk subunits to proton translocation. Key component of the proton channel; it may play a direct role in the translocation of protons across the membrane. This Drosophila simulans (Fruit fly) protein is ATP synthase subunit a (mt:ATPase6).